Reading from the N-terminus, the 373-residue chain is MVAELTALRDQIDEVDKALLNLLAKRLELVAEVGEVKSRFGLPIYVPEREASMLASRRAEAEALGVPPDLIEDVLRRVMRESYSSENDKGFKTLCPSLRPVVIVGGGGQMGRLFEKMLTLSGYQVRILEQHDWDRAADIVADAGMVIVSVPIHVTEQVIGKLPPLPKDCILVDLASVKNGPLQAMLVAHDGPVLGLHPMFGPDSGSLAKQVVVWCDGRKPEAYQWFLEQIQVWGARLHRISAVEHDQNMAFIQALRHFATFAYGLHLAEENVQLEQLLALSSPIYRLELAMVGRLFAQDPQLYADIIMSSERNLALIKRYYKRFGEAIELLEQGDKQAFIDSFRKVEHWFGDYAQRFQSESRVLLRQANDNRQ.

Residues 1 to 90 enclose the Chorismate mutase domain; that stretch reads MVAELTALRD…ESYSSENDKG (90 aa). The Prephenate/arogenate dehydrogenase domain maps to 99–361; that stretch reads RPVVIVGGGG…DYAQRFQSES (263 aa).

This sequence in the C-terminal section; belongs to the prephenate/arogenate dehydrogenase family.

It localises to the cytoplasm. It catalyses the reaction chorismate = prephenate. It carries out the reaction prephenate + NAD(+) = 3-(4-hydroxyphenyl)pyruvate + CO2 + NADH. It participates in amino-acid biosynthesis; L-tyrosine biosynthesis; (4-hydroxyphenyl)pyruvate from prephenate (NAD(+) route): step 1/1. Its pathway is metabolic intermediate biosynthesis; prephenate biosynthesis; prephenate from chorismate: step 1/1. The protein is T-protein (tyrA) of Escherichia coli (strain K12).